Reading from the N-terminus, the 505-residue chain is Actin nucleation-promoting factor WASL (505 aa).

N-acetylserine is present on serine 2. Residues 34–141 enclose the WH1 domain; that stretch reads LGKKCVTMSS…KAVTDLLGRR (108 aa). Disordered stretches follow at residues 138–163 and 185–205; these read LGRR…ATVD and TKEK…DIGT. The span at 186-198 shows a compositional bias: basic residues; that stretch reads KEKKKGKAKKKRL. The CRIB domain maps to 203 to 216; the sequence is IGTPSNFQHIGHVG. Phosphoserine; by TNK2 is present on serine 242. Tyrosine 256 carries the post-translational modification Phosphotyrosine; by FAK1 and TNK2. Disordered regions lie at residues 266 to 406, 449 to 468, and 477 to 505; these read EAVK…AGSK, SVTD…SGIV, and KRSK…EWED. Pro residues-rich tracts occupy residues 276-349, 356-365, and 372-391; these read APPP…PLPA, SGPPPPPPPL, and APPP…PPGL. Arginine 307 bears the Omega-N-methylarginine mark. WH2 domains follow at residues 405–422 and 433–450; these read SKAA…LKKV and GRDA…LKSV. Residues serine 484 and serine 485 each carry the phosphoserine modification. The segment covering 486 to 505 has biased composition (acidic residues); that stretch reads DEDEDEDDDEDFEDDDEWED.

As to quaternary structure, binds actin and the Arp2/3 complex. Interacts with CDC42. Interacts with FCHSD1. Interacts with FCHSD2. Binds to SH3 domains of GRB2. Interacts with the C-terminal SH3 domain of DNMBP. Interacts with SNX9. Interacts with the WW domains of PRPF40A/FBP11. Interacts with PTK2/FAK1. Interacts with PACSIN1, PACSIN2 and PACSIN3. Interacts with NOSTRIN. Binds to TNK2. Interacts with SNX33. Interacts with NONO (via second RRM domain); the interaction is direct. Component of a multiprotein complex with NONO and SFPQ; associates with the complex via direct interaction with NONO. In terms of processing, phosphorylation at Ser-242, Tyr-256, Ser-484 and Ser-485 enhances actin polymerization activity.

Its subcellular location is the cytoplasm. It localises to the cytoskeleton. The protein localises to the nucleus. In terms of biological role, regulates actin polymerization by stimulating the actin-nucleating activity of the Arp2/3 complex. Involved in various processes, such as mitosis and cytokinesis, via its role in the regulation of actin polymerization. Together with CDC42, involved in the extension and maintenance of the formation of thin, actin-rich surface projections called filopodia. In addition to its role in the cytoplasm, also plays a role in the nucleus by regulating gene transcription, probably by promoting nuclear actin polymerization. Binds to HSF1/HSTF1 and forms a complex on heat shock promoter elements (HSE) that negatively regulates HSP90 expression. Plays a role in dendrite spine morphogenesis. The polypeptide is Actin nucleation-promoting factor WASL (WASL) (Bos taurus (Bovine)).